The chain runs to 416 residues: Glutamate dehydrogenase (416 aa).

Lys105 is an active-site residue.

Belongs to the Glu/Leu/Phe/Val dehydrogenases family. Homohexamer.

It catalyses the reaction L-glutamate + NAD(+) + H2O = 2-oxoglutarate + NH4(+) + NADH + H(+). The catalysed reaction is L-glutamate + NADP(+) + H2O = 2-oxoglutarate + NH4(+) + NADPH + H(+). In Thermotoga maritima (strain ATCC 43589 / DSM 3109 / JCM 10099 / NBRC 100826 / MSB8), this protein is Glutamate dehydrogenase (gdhA).